The following is a 165-amino-acid chain: Nucleotide-binding protein P9211_04811 (165 aa).

This sequence belongs to the YajQ family.

Its function is as follows. Nucleotide-binding protein. The sequence is that of Nucleotide-binding protein P9211_04811 from Prochlorococcus marinus (strain MIT 9211).